The chain runs to 387 residues: 1-deoxy-D-xylulose 5-phosphate reductoisomerase (387 aa).

NADPH contacts are provided by Thr10, Gly11, Ser12, Val13, Asn38, and Asn119. Lys120 is a binding site for 1-deoxy-D-xylulose 5-phosphate. NADPH is bound at residue Glu121. Asp145 lines the Mn(2+) pocket. 4 residues coordinate 1-deoxy-D-xylulose 5-phosphate: Ser146, Glu147, Ser170, and His193. Glu147 serves as a coordination point for Mn(2+). Gly199 is a binding site for NADPH. Ser206, Asn211, Lys212, and Glu215 together coordinate 1-deoxy-D-xylulose 5-phosphate. Glu215 provides a ligand contact to Mn(2+).

Belongs to the DXR family. Mg(2+) is required as a cofactor. It depends on Mn(2+) as a cofactor.

The catalysed reaction is 2-C-methyl-D-erythritol 4-phosphate + NADP(+) = 1-deoxy-D-xylulose 5-phosphate + NADPH + H(+). It participates in isoprenoid biosynthesis; isopentenyl diphosphate biosynthesis via DXP pathway; isopentenyl diphosphate from 1-deoxy-D-xylulose 5-phosphate: step 1/6. Functionally, catalyzes the NADPH-dependent rearrangement and reduction of 1-deoxy-D-xylulose-5-phosphate (DXP) to 2-C-methyl-D-erythritol 4-phosphate (MEP). This Wolbachia sp. subsp. Drosophila simulans (strain wRi) protein is 1-deoxy-D-xylulose 5-phosphate reductoisomerase.